The following is a 488-amino-acid chain: uncharacterized protein (488 aa).

Position 27–38 (isoleucine 27–alanine 38) interacts with NAD(+).

This sequence belongs to the mannitol dehydrogenase family. UxuB subfamily.

This is an uncharacterized protein from Escherichia coli (strain K12).